The chain runs to 476 residues: Glutamate--tRNA ligase (476 aa).

Residues 9 to 19 (PSPTGLFHIGT) carry the 'HIGH' region motif. A 'KMSKS' region motif is present at residues 248-252 (KLSKR). Lys-251 provides a ligand contact to ATP.

This sequence belongs to the class-I aminoacyl-tRNA synthetase family. Glutamate--tRNA ligase type 1 subfamily. In terms of assembly, monomer.

It localises to the cytoplasm. It catalyses the reaction tRNA(Glu) + L-glutamate + ATP = L-glutamyl-tRNA(Glu) + AMP + diphosphate. Functionally, catalyzes the attachment of glutamate to tRNA(Glu) in a two-step reaction: glutamate is first activated by ATP to form Glu-AMP and then transferred to the acceptor end of tRNA(Glu). The protein is Glutamate--tRNA ligase of Prochlorococcus marinus (strain MIT 9301).